We begin with the raw amino-acid sequence, 238 residues long: MKLYPAIDLLNGKSVRLTQGDYDQVSLTEDPLYQAQRLTDAGFAHLHLVDLDGARAQRPINRRIITRIREQTSAFIELGGGIRTLAAMEIYLTIGIDRLIVGSAAVSDPDLVEQAIARFGSNRIAVGIDTRAGKVATNGWLTTSQQTANALLTAMQQRGVTTFIVTDIAKDGMMQGPNAQLLADLQQAMPQATIIASGGVSSLADLRRLQTAGIQAAIIGKAWQTGAIELAMLKQMEG.

The active-site Proton acceptor is the aspartate 8. The active-site Proton donor is aspartate 129.

The protein belongs to the HisA/HisF family.

It is found in the cytoplasm. The catalysed reaction is 1-(5-phospho-beta-D-ribosyl)-5-[(5-phospho-beta-D-ribosylamino)methylideneamino]imidazole-4-carboxamide = 5-[(5-phospho-1-deoxy-D-ribulos-1-ylimino)methylamino]-1-(5-phospho-beta-D-ribosyl)imidazole-4-carboxamide. It participates in amino-acid biosynthesis; L-histidine biosynthesis; L-histidine from 5-phospho-alpha-D-ribose 1-diphosphate: step 4/9. The polypeptide is 1-(5-phosphoribosyl)-5-[(5-phosphoribosylamino)methylideneamino] imidazole-4-carboxamide isomerase (Lacticaseibacillus casei (strain BL23) (Lactobacillus casei)).